We begin with the raw amino-acid sequence, 284 residues long: Putative ABC transporter ATP-binding protein SCO5958 (284 aa).

The ABC transporter domain maps to 15 to 250; the sequence is VALRGAAFAY…DLLRRAGLRL (236 aa). 48-55 is a binding site for ATP; it reads GRNGSGKT.

The protein belongs to the ABC transporter superfamily.

The protein localises to the cell membrane. Functionally, probably part of an ABC transporter complex. Responsible for energy coupling to the transport system. The chain is Putative ABC transporter ATP-binding protein SCO5958 from Streptomyces coelicolor (strain ATCC BAA-471 / A3(2) / M145).